The chain runs to 142 residues: Hemoglobin subunit alpha-A (142 aa).

One can recognise a Globin domain in the interval 2–142 (VLSAADKTNV…VGAVLTAKYR (141 aa)). Histidine 59 contacts O2. Histidine 88 contacts heme b.

This sequence belongs to the globin family. As to quaternary structure, heterotetramer of two alpha chains and two beta chains. As to expression, red blood cells.

Its function is as follows. Involved in oxygen transport from the lung to the various peripheral tissues. The chain is Hemoglobin subunit alpha-A (HBAA) from Anas platyrhynchos platyrhynchos (Northern mallard).